Reading from the N-terminus, the 178-residue chain is Translation machinery-associated protein 16 (178 aa).

The protein belongs to the TMA16 family.

Its subcellular location is the nucleus. This is Translation machinery-associated protein 16 (TMA16) from Saccharomyces cerevisiae (strain ATCC 204508 / S288c) (Baker's yeast).